The sequence spans 67 residues: MKAKELRELTDAELNKKLSDSKEELFKLRFQLATGQLDNPMKLQEVRRRIARVKTIIRERELGIRRA.

Belongs to the universal ribosomal protein uL29 family.

The sequence is that of Large ribosomal subunit protein uL29 from Pelotomaculum thermopropionicum (strain DSM 13744 / JCM 10971 / SI).